A 20-amino-acid chain; its full sequence is Agglutinin beta-2 chain (20 aa).

A disordered region spans residues 1–20 (GRNGKSQSIIVGPWGDRVTN).

Belongs to the jacalin lectin family. As to quaternary structure, formed of four alpha chains and four beta chains.

Functionally, D-galactose-specific lectin, binds the T-antigen structure Gal-beta1,3-GalNAc. The protein is Agglutinin beta-2 chain of Maclura pomifera (Osage orange).